The following is a 382-amino-acid chain: Lipid-A-disaccharide synthase (382 aa).

The protein belongs to the LpxB family.

The enzyme catalyses 2-N,3-O-bis[(3R)-3-hydroxytetradecanoyl]-alpha-D-glucosaminyl 1-phosphate + UDP-2-N,3-O-bis[(3R)-3-hydroxytetradecanoyl]-alpha-D-glucosamine = lipid A disaccharide (E. coli) + UDP + H(+). The catalysed reaction is a lipid X + a UDP-2-N,3-O-bis[(3R)-3-hydroxyacyl]-alpha-D-glucosamine = a lipid A disaccharide + UDP + H(+). The protein operates within glycolipid biosynthesis; lipid IV(A) biosynthesis; lipid IV(A) from (3R)-3-hydroxytetradecanoyl-[acyl-carrier-protein] and UDP-N-acetyl-alpha-D-glucosamine: step 5/6. Functionally, condensation of UDP-2,3-diacylglucosamine and 2,3-diacylglucosamine-1-phosphate to form lipid A disaccharide, a precursor of lipid A, a phosphorylated glycolipid that anchors the lipopolysaccharide to the outer membrane of the cell. This is Lipid-A-disaccharide synthase from Citrobacter koseri (strain ATCC BAA-895 / CDC 4225-83 / SGSC4696).